The sequence spans 333 residues: Geranylgeranyl pyrophosphate synthase olcC (333 aa).

3 residues coordinate isopentenyl diphosphate: K61, R64, and H93. Residues D100 and D104 each contribute to the Mg(2+) site. R109 provides a ligand contact to dimethylallyl diphosphate. R110 contributes to the isopentenyl diphosphate binding site. 3 residues coordinate dimethylallyl diphosphate: K187, T188, and Q221. D224 contacts Mg(2+). 3 residues coordinate dimethylallyl diphosphate: N228, K238, and K248.

It belongs to the FPP/GGPP synthase family. The cofactor is Mg(2+).

The enzyme catalyses isopentenyl diphosphate + dimethylallyl diphosphate = (2E)-geranyl diphosphate + diphosphate. It catalyses the reaction isopentenyl diphosphate + (2E)-geranyl diphosphate = (2E,6E)-farnesyl diphosphate + diphosphate. The catalysed reaction is isopentenyl diphosphate + (2E,6E)-farnesyl diphosphate = (2E,6E,10E)-geranylgeranyl diphosphate + diphosphate. Its pathway is secondary metabolite biosynthesis; terpenoid biosynthesis. Its function is as follows. Geranylgeranyl pyrophosphate synthase; part of the gene cluster that mediates the biosynthesis of 15-deoxyoxalicine B. The first step of the pathway is the synthesis of nicotinyl-CoA from nicotinic acid by the nicotinic acid-CoA ligase olcI. Nicotinyl-CoA is then a substrate of polyketide synthase olcA to produce 4-hydroxy-6-(3-pyridinyl)-2H-pyran-2-one (HPPO) which is further prenylated by the polyprenyl transferase olcH to yield geranylgeranyl-HPPO. Geranylgeranyl pyrophosphate is provided by the cluster-specific geranylgeranyl pyrophosphate synthase olcC. The FAD-dependent monooxygenase olcE catalyzes the epoxidation of geranylgeranyl-HPPO and the terpene cyclase olcD catalyzes the cyclization of the terpenoid component, resulting in the formation of the tricyclic terpene moiety seen in predecaturin E. The cytochrome P450 monooxygenase then catalyzes the allylic oxidation of predecaturin E, which is followed by spirocylization with concomitant loss of one molecule of water to form decaturin E. Decaturin E is the substrate of the cytochrome P450 monooxygenase olcJ which hydroxylates it at the C-29 position to form decaturin F. The short-chain dehydrogenase/reductase olcF may catalyze the oxidation of decaturin F to generate the 29-hydroxyl-27-one intermediate, and subsequent hemiacetal formation probably leads to the formation of decaturin C. The dioxygenase olcK may be a peroxisomal enzyme that catalyzes the hydroxylation of decaturin C into decaturin A once decaturin C is shuttled into the peroxisome by the MFS transporter olcL. Finally the cytochrome P450 monooxygenase olcB catalyzes the oxidative rearrangement to yield 15-deoxyoxalicine B. In the absence of olcJ, decaturin E may be shunted to a pathway in which it is oxidized to a ketone, possibly by olcF, to form decaturin D, which undergoes further allylic oxidation to yield decaturin G. Moreover, in the absence of oclK or oclL, oclB can convert decaturin C into 15-deoxyoxalicine A. The protein is Geranylgeranyl pyrophosphate synthase olcC of Penicillium canescens.